The primary structure comprises 730 residues: Translation initiation factor IF-2 (730 aa).

Residues 48-151 (GNGNQKQGGS…NKAKPLPEKV (104 aa)) are disordered. 2 stretches are compositionally biased toward basic and acidic residues: residues 61 to 77 (EQQK…DHGQ) and 89 to 104 (NQHD…KGKA). Residues 110–123 (KPKHKGNKNKKQHQ) show a composition bias toward basic residues. Over residues 137-148 (RQPEMNKAKPLP) the composition is skewed to basic and acidic residues. The tr-type G domain occupies 231–400 (ERPPVVTIMG…LLVAEVEELK (170 aa)). The segment at 240–247 (GHVDHGKT) is G1. GTP is bound at residue 240–247 (GHVDHGKT). Residues 265 to 269 (GITQH) are G2. The G3 stretch occupies residues 286-289 (DTPG). Residues 286-290 (DTPGH) and 340-343 (NKMD) each bind GTP. The G4 stretch occupies residues 340–343 (NKMD). The interval 376–378 (SAL) is G5.

Belongs to the TRAFAC class translation factor GTPase superfamily. Classic translation factor GTPase family. IF-2 subfamily.

The protein resides in the cytoplasm. One of the essential components for the initiation of protein synthesis. Protects formylmethionyl-tRNA from spontaneous hydrolysis and promotes its binding to the 30S ribosomal subunits. Also involved in the hydrolysis of GTP during the formation of the 70S ribosomal complex. The chain is Translation initiation factor IF-2 from Halalkalibacterium halodurans (strain ATCC BAA-125 / DSM 18197 / FERM 7344 / JCM 9153 / C-125) (Bacillus halodurans).